Reading from the N-terminus, the 1010-residue chain is 2-oxoglutarate dehydrogenase-like, mitochondrial (1010 aa).

Residues 1-107 (MSQLRLLLFR…RASVSSCTKT (107 aa)) constitute a mitochondrion transit peptide. The tract at residues 28 to 47 (GGRRRSSGPPTTIPRSRGGV) is disordered. Residues histidine 130, aspartate 143, and aspartate 145 each coordinate Ca(2+). Residues arginine 299, aspartate 398, asparagine 431, isoleucine 433, and glutamine 663 each contribute to the thiamine diphosphate site. Mg(2+) is bound by residues aspartate 398, asparagine 431, and isoleucine 433.

The protein belongs to the alpha-ketoglutarate dehydrogenase family. In terms of assembly, the OGDHC complex comprises multiple copies of three catalytic enzyme components, the 2-oxoglutarate dehydrogenase (OGDH/E1), the dihydrolipoamide dehydrogenase (DLST/E2) and the dihydrolipoamide dehydrogenase (DLD/E3). OGDHL/E1-like isoenzyme may replace OGDH in the OGDHC complex in the brain. The presence of either ODGH/E1 or ODGHL/E1-like isoenzyme in the complex may depend on its tissular distribution. Thiamine diphosphate is required as a cofactor. The cofactor is Mg(2+). In terms of tissue distribution, the OGDHL-containing OGDHC complex is present in the brain, but not in the heart.

The protein resides in the mitochondrion matrix. It carries out the reaction N(6)-[(R)-lipoyl]-L-lysyl-[protein] + 2-oxoglutarate + H(+) = N(6)-[(R)-S(8)-succinyldihydrolipoyl]-L-lysyl-[protein] + CO2. Its function is as follows. 2-oxoglutarate dehydrogenase (E1-like) component of the 2-oxoglutarate dehydrogenase multienzyme complex (OGDHC) which mediates the decarboxylation of alpha-ketoglutarate in the tricarboxylic acid cycle. The OGDHC complex catalyzes the overall conversion of 2-oxoglutarate to succinyl-CoA and CO(2) while reducing NAD(+) to NADH. The OGDHC complex is mainly active in the mitochondrion. Involved in the inhibition of cell proliferation and in apoptosis. The sequence is that of 2-oxoglutarate dehydrogenase-like, mitochondrial from Rattus norvegicus (Rat).